The sequence spans 1786 residues: Protein TIC 214 (1786 aa).

The next 6 helical transmembrane spans lie at 19-39, 68-88, 91-111, 133-153, 176-196, and 227-247; these read IINS…FSIG, FIAG…HLAL, PHTI…WNNH, VFLN…SSML, VGWL…LVWI, and IFSI…PSPI. Residues 1007-1046 adopt a coiled-coil conformation; that stretch reads SLSEKKIKNLIDRKKTIRNQIEEISKEKQNLTNSCTKLRY.

The protein belongs to the TIC214 family. Part of the Tic complex. Component of the 1-MD complex, composed of TIC20-I, TIC214, TIC100 and TIC56. Interacts with the translocating preproteins. Hydrolysis of ATP is essential for the formation of this complex. The 1-MD complex interacts with TIC21.

It is found in the plastid. The protein resides in the chloroplast inner membrane. In terms of biological role, involved in protein precursor import into chloroplasts. May be part of an intermediate translocation complex acting as a protein-conducting channel at the inner envelope. This is Protein TIC 214 from Arabidopsis thaliana (Mouse-ear cress).